The sequence spans 252 residues: Mediator of RNA polymerase II transcription subunit 4 (252 aa).

Positions 70-112 (KIHQEMQVLEKEVEKRDSDIQQLQKQLKEAEHILATAVYQAKE) form a coiled coil. The interval 218-252 (HSNEFLMESLGPNKENEEDVEVMSTDSSSSSSDSD) is disordered. Low complexity predominate over residues 241 to 252 (STDSSSSSSDSD).

Belongs to the Mediator complex subunit 4 family. As to quaternary structure, component of the Mediator complex.

The protein localises to the nucleus. Its function is as follows. Component of the Mediator complex, a coactivator involved in the regulated transcription of nearly all RNA polymerase II-dependent genes. Mediator functions as a bridge to convey information from gene-specific regulatory proteins to the basal RNA polymerase II transcription machinery. Mediator is recruited to promoters by direct interactions with regulatory proteins and serves as a scaffold for the assembly of a functional preinitiation complex with RNA polymerase II and the general transcription factors. In Xenopus tropicalis (Western clawed frog), this protein is Mediator of RNA polymerase II transcription subunit 4 (med4).